The sequence spans 287 residues: Ribosomal RNA small subunit methyltransferase I (287 aa).

Belongs to the methyltransferase superfamily. RsmI family.

The protein localises to the cytoplasm. The enzyme catalyses cytidine(1402) in 16S rRNA + S-adenosyl-L-methionine = 2'-O-methylcytidine(1402) in 16S rRNA + S-adenosyl-L-homocysteine + H(+). Catalyzes the 2'-O-methylation of the ribose of cytidine 1402 (C1402) in 16S rRNA. The sequence is that of Ribosomal RNA small subunit methyltransferase I from Streptococcus pyogenes serotype M1.